Consider the following 202-residue polypeptide: Protein Nef (202 aa).

G2 is lipidated: N-myristoyl glycine; by host. Phosphoserine; by host is present on S6. Residues 62–65 are acidic; interacts with host PACS1 and PACS2; stabilizes the interaction of NEF/MHC-I with host AP1M1; necessary for MHC-I internalization; the sequence is EEEE. The tract at residues 69–78 is SH3-binding; interaction with Src family tyrosine kinases; the sequence is PVTPQVPLRP. Residues 72-75 carry the PxxP; stabilizes the interaction of NEF/MHC-I with host AP1M1; necessary for MHC-I internalization motif; it reads PQVP. The mediates dimerization, Nef-PTE1 interaction stretch occupies residues 108 to 124; sequence DILDLWIYHTQGYFPDW. The interval 148-180 is binding to ATP6V1H; it reads VEPDKVEEANKGENTRLLHPVSLHGMDDPEREV. A Dileucine internalization motif; necessary for CD4 internalization motif is present at residues 164–165; sequence LL. Positions 174 to 175 match the Diacidic; necessary for CD4 internalization motif; it reads DD.

The protein belongs to the lentivirus primate group Nef protein family. In terms of assembly, monomer; cytosolic form. Homodimer; membrane bound form. Interacts with Nef associated p21-activated kinase (PAK2); this interaction activates PAK2. Associates with the Nef-MHC-I-AP1 complex; this complex is required for MHC-I internalization. Interacts (via C-terminus) with host PI3-kinase. Interacts with host PACS1; this interaction seems to be weak. Interacts with host PACS2. Interacts with host LCK and MAPK3; these interactions inhibit the kinase activity of the latter. Interacts with host ATP6V1H; this interaction may play a role in CD4 endocytosis. Associates with the CD4-Nef-AP2 complex; this complex is required for CD4 internalization. Interacts with host AP2 subunit alpha and AP2 subunit sigma2. Interacts with TCR-zeta chain; this interaction up-regulates the Fas ligand (FasL) surface expression. Interacts with host HCK, LYN, and SRC; these interactions activate the Src family kinases. Interacts with MAP3K5; this interaction inhibits the Fas and TNFR-mediated death signals. Interacts with beta-COP and PTE1. Interacts with human RACK1; this increases Nef phosphorylation by PKC. Interacts with TP53; this interaction decreases the half-life of TP53, protecting the infected cell against p53-mediated apoptosis. The virion-associated Nef proteins are cleaved by the viral protease to release the soluble C-terminal core protein. Nef is probably cleaved concomitantly with viral structural proteins on maturation of virus particles. Post-translationally, myristoylated. In terms of processing, phosphorylated on serine residues, probably by host PKCdelta and theta.

Its subcellular location is the host cell membrane. The protein resides in the virion. It is found in the secreted. The protein localises to the host Golgi apparatus membrane. Factor of infectivity and pathogenicity, required for optimal virus replication. Alters numerous pathways of T-lymphocyte function and down-regulates immunity surface molecules in order to evade host defense and increase viral infectivity. Alters the functionality of other immunity cells, like dendritic cells, monocytes/macrophages and NK cells. Functionally, in infected CD4(+) T-lymphocytes, down-regulates the surface MHC-I, mature MHC-II, CD4, CD28, CCR5 and CXCR4 molecules. Mediates internalization and degradation of host CD4 through the interaction of with the cytoplasmic tail of CD4, the recruitment of AP-2 (clathrin adapter protein complex 2), internalization through clathrin coated pits, and subsequent transport to endosomes and lysosomes for degradation. Diverts host MHC-I molecules to the trans-Golgi network-associated endosomal compartments by an endocytic pathway to finally target them for degradation. MHC-I down-regulation may involve AP-1 (clathrin adapter protein complex 1) or possibly Src family kinase-ZAP70/Syk-PI3K cascade recruited by PACS2. In consequence infected cells are masked for immune recognition by cytotoxic T-lymphocytes. Decreasing the number of immune receptors also prevents reinfection by more HIV particles (superinfection). Down-regulates host SERINC3 and SERINC5 thereby excluding these proteins from the viral particles. Virion infectivity is drastically higher when SERINC3 or SERINC5 are excluded from the viral envelope, because these host antiviral proteins impair the membrane fusion event necessary for subsequent virion penetration. Its function is as follows. Bypasses host T-cell signaling by inducing a transcriptional program nearly identical to that of anti-CD3 cell activation. Interaction with TCR-zeta chain up-regulates the Fas ligand (FasL). Increasing surface FasL molecules and decreasing surface MHC-I molecules on infected CD4(+) cells send attacking cytotoxic CD8+ T-lymphocytes into apoptosis. In terms of biological role, plays a role in optimizing the host cell environment for viral replication without causing cell death by apoptosis. Protects the infected cells from apoptosis in order to keep them alive until the next virus generation is ready to strike. Inhibits the Fas and TNFR-mediated death signals by blocking MAP3K5/ASK1. Decreases the half-life of TP53, protecting the infected cell against p53-mediated apoptosis. Inhibits the apoptotic signals regulated by the Bcl-2 family proteins through the formation of a Nef/PI3-kinase/PAK2 complex that leads to activation of PAK2 and induces phosphorylation of host BAD. Extracellular Nef protein targets CD4(+) T-lymphocytes for apoptosis by interacting with CXCR4 surface receptors. The protein is Protein Nef of Human immunodeficiency virus type 1 group M subtype B (isolate Lai) (HIV-1).